A 222-amino-acid polypeptide reads, in one-letter code: Phosphoglycolate phosphatase (222 aa).

Asp12 serves as the catalytic Nucleophile. Residues Asp12, Asp14, and Asp175 each coordinate Mg(2+).

It belongs to the HAD-like hydrolase superfamily. CbbY/CbbZ/Gph/YieH family. Requires Mg(2+) as cofactor.

The enzyme catalyses 2-phosphoglycolate + H2O = glycolate + phosphate. It participates in organic acid metabolism; glycolate biosynthesis; glycolate from 2-phosphoglycolate: step 1/1. In terms of biological role, specifically catalyzes the dephosphorylation of 2-phosphoglycolate. Is involved in the dissimilation of the intracellular 2-phosphoglycolate formed during the DNA repair of 3'-phosphoglycolate ends, a major class of DNA lesions induced by oxidative stress. The protein is Phosphoglycolate phosphatase of Chromobacterium violaceum (strain ATCC 12472 / DSM 30191 / JCM 1249 / CCUG 213 / NBRC 12614 / NCIMB 9131 / NCTC 9757 / MK).